The chain runs to 161 residues: Ribosomal RNA large subunit methyltransferase H (161 aa).

S-adenosyl-L-methionine contacts are provided by residues Leu78, Gly110, and 129-134 (LGRMTF).

Belongs to the RNA methyltransferase RlmH family. In terms of assembly, homodimer.

The protein localises to the cytoplasm. The catalysed reaction is pseudouridine(1915) in 23S rRNA + S-adenosyl-L-methionine = N(3)-methylpseudouridine(1915) in 23S rRNA + S-adenosyl-L-homocysteine + H(+). Its function is as follows. Specifically methylates the pseudouridine at position 1915 (m3Psi1915) in 23S rRNA. The sequence is that of Ribosomal RNA large subunit methyltransferase H from Symbiobacterium thermophilum (strain DSM 24528 / JCM 14929 / IAM 14863 / T).